Reading from the N-terminus, the 469-residue chain is Glutamine synthetase (469 aa).

Residues 16 to 100 (EGVQYVDLRF…MICDIYDPVT (85 aa)) enclose the GS beta-grasp domain. The region spanning 108–469 (TRYIAQKAEQ…PKEFELYWDI (362 aa)) is the GS catalytic domain. Mg(2+)-binding residues include E133 and E135. Position 207 (E207) interacts with ATP. Positions 212 and 220 each coordinate Mg(2+). L-glutamate is bound by residues 264–265 (NG) and G265. Residue H269 coordinates Mg(2+). ATP contacts are provided by residues 271–273 (HFS) and S273. L-glutamate-binding residues include R321, E327, and R339. Positions 339, 344, and 353 each coordinate ATP. E358 contributes to the Mg(2+) binding site. R360 lines the L-glutamate pocket. An O-AMP-tyrosine modification is found at Y398.

It belongs to the glutamine synthetase family. Oligomer of 12 subunits arranged in the form of two hexagons. Requires Mg(2+) as cofactor.

It is found in the cytoplasm. It catalyses the reaction L-glutamate + NH4(+) + ATP = L-glutamine + ADP + phosphate + H(+). Its activity is regulated as follows. The activity of this enzyme could be controlled by adenylation under conditions of abundant glutamine. Catalyzes the ATP-dependent biosynthesis of glutamine from glutamate and ammonia. The polypeptide is Glutamine synthetase (Aquifex aeolicus (strain VF5)).